The primary structure comprises 154 residues: uncharacterized protein (154 aa).

An HTH marR-type domain is found at 7–143; it reads RSELEKTAVQ…IFSFVGKAAD (137 aa). Positions 57-80 form a DNA-binding region, H-T-H motif; that stretch reads AGELGKKTGLSTGSVTALVDRLEK.

This is an uncharacterized protein from Bacillus subtilis (strain 168).